Reading from the N-terminus, the 805-residue chain is BLOC-2 complex member HPS6 (805 aa).

A disordered region spans residues G743–L805. Positions G764–G773 are enriched in pro residues.

As to quaternary structure, component of the biogenesis of lysosome-related organelles complex-2 (or BLOC2) composed of HPS3, HPS5 and HPS6. Interacts with HPS5 and HPS3. Interacts with biogenesis of lysosome-related organelles complex-1 (BLOC1). Interacts with dynein intermediate chain. Interacts with AP-3 complex. Interacts with DCTN1. In terms of tissue distribution, widely expressed, with lowest expression in skeletal muscle.

It localises to the microsome membrane. The protein resides in the cytoplasm. It is found in the cytosol. Its subcellular location is the early endosome membrane. The protein localises to the lysosome membrane. Its function is as follows. May regulate the synthesis and function of lysosomes and of highly specialized organelles, such as melanosomes and platelet dense granules. Acts as a cargo adapter for the dynein-dynactin motor complex to mediate the transport of lysosomes from the cell periphery to the perinuclear region. Facilitates retrograde lysosomal trafficking by linking the motor complex to lysosomes, and perinuclear positioning of lysosomes is crucial for the delivery of endocytic cargos to lysosomes, for lysosome maturation and functioning. The sequence is that of BLOC-2 complex member HPS6 (Hps6) from Mus musculus (Mouse).